The sequence spans 78 residues: Holin (78 aa).

At 1–6 the chain is on the cytoplasmic side; it reads MNSKID. Residues 7 to 23 traverse the membrane as a helical segment; it reads SAIPFIGSLTALISGYS. Residues 24-29 lie on the Periplasmic side of the membrane; that stretch reads LHEWAS. Residues 30–46 form a helical membrane-spanning segment; sequence LFGILFGAVSVWIAYRK. Residues 47–78 lie on the Cytoplasmic side of the membrane; sequence YKEDVQARKDELAYKMLVAKIEAKKLGIAIDE.

It localises to the host cell inner membrane. Accumulates harmlessly in the cytoplasmic membrane until it reaches a critical concentration that triggers the formation of nanometer-scale pores (pinholes) causing host cell membrane depolarization and endolysin refolding and release into the periplasmic space. Once the pinholin has permeabilized the host cell membrane, the SAR-endolysin is released into the periplasm and breaks down the peptidoglycan layer. Determines the precise timing of host cell lysis. Participates with the SAR-endolysin and the U-spanin protein in the sequential events which lead to the programmed host cell lysis releasing the mature viral particles from the host cell. This Haemophilus influenzae (Bacteriophage HP1) protein is Holin (hol).